An 810-amino-acid polypeptide reads, in one-letter code: Bifunctional aspartokinase/homoserine dehydrogenase 2 (810 aa).

The interval 2-252 is aspartokinase; it reads SVIAQAGAKG…VKDACLLPLL (251 aa). Residues 253-463 form an interface region; that stretch reads RLDEASELAR…RAEKRIGLVL (211 aa). A homoserine dehydrogenase region spans residues 464–810; it reads FGKGNIGSRW…SDINRLAQLL (347 aa). Residues asparagine 468 and isoleucine 469 each contribute to the NADP(+) site. Positions 469 and 498 each coordinate NAD(+). Isoleucine 469 serves as a coordination point for NADPH. Residues arginine 501, threonine 549, and lysine 573 each coordinate NADP(+). Threonine 549 is a binding site for NAD(+). NADPH-binding residues include threonine 549 and lysine 573. Residues valine 603, alanine 605, and leucine 607 each contribute to the Na(+) site. Positions 658 and 661 each coordinate NADP(+). L-homoserine contacts are provided by glutamate 661 and aspartate 672. Lysine 676 functions as the Proton donor in the catalytic mechanism. Glycine 791 lines the NADP(+) pocket. Position 791 (glycine 791) interacts with NAD(+). Glycine 791 is a binding site for NADPH.

This sequence in the N-terminal section; belongs to the aspartokinase family. The protein in the C-terminal section; belongs to the homoserine dehydrogenase family. As to quaternary structure, homotetramer. A metal cation is required as a cofactor.

It catalyses the reaction L-homoserine + NADP(+) = L-aspartate 4-semialdehyde + NADPH + H(+). The catalysed reaction is L-homoserine + NAD(+) = L-aspartate 4-semialdehyde + NADH + H(+). It carries out the reaction L-aspartate + ATP = 4-phospho-L-aspartate + ADP. It functions in the pathway amino-acid biosynthesis; L-lysine biosynthesis via DAP pathway; (S)-tetrahydrodipicolinate from L-aspartate: step 1/4. The protein operates within amino-acid biosynthesis; L-methionine biosynthesis via de novo pathway; L-homoserine from L-aspartate: step 1/3. It participates in amino-acid biosynthesis; L-methionine biosynthesis via de novo pathway; L-homoserine from L-aspartate: step 3/3. Its pathway is amino-acid biosynthesis; L-threonine biosynthesis; L-threonine from L-aspartate: step 1/5. It functions in the pathway amino-acid biosynthesis; L-threonine biosynthesis; L-threonine from L-aspartate: step 3/5. In terms of biological role, bifunctional aspartate kinase and homoserine dehydrogenase that catalyzes the first and the third steps toward the synthesis of lysine, methionine and threonine from aspartate. This Escherichia coli (strain K12) protein is Bifunctional aspartokinase/homoserine dehydrogenase 2 (metL).